The chain runs to 251 residues: MGDTGTLVLLRHGESDWNARNLFTGWVDVGLTEKGRAEAVRSGELLAEQDLLPDVLYTSLLRRAITTAHLALDSADRLWIPVRRSWRLNERHYGALQGLDKAETKARYGEEQFMAWRRSYDTPPPLIEKGSEFSQDADPRYANIDGGPLTECLADVVARFLPYFTDVIVGDLRAGKTVLIVAHGNSLRALVKHLDHMSDEDIVGLNIPTGIPLRYDLDERLQPVVPGGTYLDPEAAAAGAAAVASQGAAKA.

Substrate-binding positions include 11-18 (RHGESDWN), 24-25 (TG), R63, 90-93 (ERHY), K101, 117-118 (RR), and 184-185 (GN). H12 functions as the Tele-phosphohistidine intermediate in the catalytic mechanism. The Proton donor/acceptor role is filled by E90.

It belongs to the phosphoglycerate mutase family. BPG-dependent PGAM subfamily.

It catalyses the reaction (2R)-2-phosphoglycerate = (2R)-3-phosphoglycerate. It functions in the pathway carbohydrate degradation; glycolysis; pyruvate from D-glyceraldehyde 3-phosphate: step 3/5. Functionally, catalyzes the interconversion of 2-phosphoglycerate and 3-phosphoglycerate. In Mycobacterium marinum (strain ATCC BAA-535 / M), this protein is 2,3-bisphosphoglycerate-dependent phosphoglycerate mutase.